A 446-amino-acid polypeptide reads, in one-letter code: Histidine--tRNA ligase (446 aa).

This sequence belongs to the class-II aminoacyl-tRNA synthetase family. As to quaternary structure, homodimer.

It is found in the cytoplasm. The enzyme catalyses tRNA(His) + L-histidine + ATP = L-histidyl-tRNA(His) + AMP + diphosphate + H(+). The polypeptide is Histidine--tRNA ligase (Burkholderia pseudomallei (strain K96243)).